We begin with the raw amino-acid sequence, 430 residues long: MAQILAASPTCQMRVPKHSSVIASSSKLWSSVVLKQKKQSNNKVRGFRVLALQSDNSTVNRVETLLNLDTKPYSDRIIAEYIWIGGSGIDLRSKSRTIEKPVEDPSELPKWNYDGSSTGQAPGEDSEVILYPQAIFRDPFRGGNNILVICDTWTPAGEPIPTNKRAKAAEIFSNKKVSGEVPWFGIEQEYTLLQQNVKWPLGWPVGAFPGPQGPYYCGVGADKIWGRDISDAHYKACLYAGINISGTNGEVMPGQWEFQVGPSVGIDAGDHVWCARYLLERITEQAGVVLTLDPKPIEGDWNGAGCHTNYSTKSMREEGGFEVIKKAILNLSLRHKEHISAYGEGNERRLTGKHETASIDQFSWGVANRGCSIRVGRDTEAKGKGYLEDRRPASNMDPYIVTSLLAETTLLWEPTLEAEALAAQKLSLNV.

The transit peptide at 1 to 45 (MAQILAASPTCQMRVPKHSSVIASSSKLWSSVVLKQKKQSNNKVR) directs the protein to the chloroplast and mitochondrion. The GS beta-grasp domain occupies 77 to 157 (IIAEYIWIGG…VICDTWTPAG (81 aa)). The disordered stretch occupies residues 97–122 (TIEKPVEDPSELPKWNYDGSSTGQAP). Ser106 carries the phosphoserine modification. In terms of domain architecture, GS catalytic spans 161 to 430 (PTNKRAKAAE…LAAQKLSLNV (270 aa)).

It belongs to the glutamine synthetase family. In terms of assembly, homooctamer. Expressed in mesophyll and epidermal cells of leaves.

It is found in the plastid. The protein localises to the chloroplast. It localises to the mitochondrion. It catalyses the reaction L-glutamate + NH4(+) + ATP = L-glutamine + ADP + phosphate + H(+). In terms of biological role, the light-modulated chloroplast/mitochondrial enzyme, encoded by a nuclear gene and expressed primarily in leaves, is responsible for the reassimilation of the ammonia generated by photorespiration. This is Glutamine synthetase, chloroplastic/mitochondrial (GLN2) from Arabidopsis thaliana (Mouse-ear cress).